Reading from the N-terminus, the 444-residue chain is Methylenetetrahydrofolate--tRNA-(uracil-5-)-methyltransferase TrmFO (444 aa).

10–15 (GAGLAG) is an FAD binding site.

The protein belongs to the MnmG family. TrmFO subfamily. Requires FAD as cofactor.

The protein localises to the cytoplasm. The enzyme catalyses uridine(54) in tRNA + (6R)-5,10-methylene-5,6,7,8-tetrahydrofolate + NADH + H(+) = 5-methyluridine(54) in tRNA + (6S)-5,6,7,8-tetrahydrofolate + NAD(+). It carries out the reaction uridine(54) in tRNA + (6R)-5,10-methylene-5,6,7,8-tetrahydrofolate + NADPH + H(+) = 5-methyluridine(54) in tRNA + (6S)-5,6,7,8-tetrahydrofolate + NADP(+). Its function is as follows. Catalyzes the folate-dependent formation of 5-methyl-uridine at position 54 (M-5-U54) in all tRNAs. This Streptococcus pneumoniae (strain ATCC 700669 / Spain 23F-1) protein is Methylenetetrahydrofolate--tRNA-(uracil-5-)-methyltransferase TrmFO.